The chain runs to 245 residues: Carbohydrate deacetylase (245 aa).

Residues H59 and H125 each contribute to the Mg(2+) site.

This sequence belongs to the YdjC deacetylase family. In terms of assembly, homodimer. Mg(2+) serves as cofactor.

In terms of biological role, probably catalyzes the deacetylation of acetylated carbohydrates an important step in the degradation of oligosaccharides. The sequence is that of Carbohydrate deacetylase from Listeria welshimeri serovar 6b (strain ATCC 35897 / DSM 20650 / CCUG 15529 / CIP 8149 / NCTC 11857 / SLCC 5334 / V8).